Reading from the N-terminus, the 353-residue chain is Phosphate acyltransferase (353 aa).

This sequence belongs to the PlsX family. Homodimer. Probably interacts with PlsY.

Its subcellular location is the cytoplasm. It catalyses the reaction a fatty acyl-[ACP] + phosphate = an acyl phosphate + holo-[ACP]. It participates in lipid metabolism; phospholipid metabolism. Catalyzes the reversible formation of acyl-phosphate (acyl-PO(4)) from acyl-[acyl-carrier-protein] (acyl-ACP). This enzyme utilizes acyl-ACP as fatty acyl donor, but not acyl-CoA. This is Phosphate acyltransferase from Afipia carboxidovorans (strain ATCC 49405 / DSM 1227 / KCTC 32145 / OM5) (Oligotropha carboxidovorans).